A 261-amino-acid chain; its full sequence is Proliferating cell nuclear antigen (261 aa).

Residues Lys14, Lys77, and Lys80 each carry the N6-acetyllysine modification. The DNA-binding element occupies 61–80; sequence RCDRNLAMGVNLTSMSKILK. Cys135 and Cys162 are disulfide-bonded. Lys164 participates in a covalent cross-link: Glycyl lysine isopeptide (Lys-Gly) (interchain with G-Cter in SUMO2); alternate. Lys164 is covalently cross-linked (Glycyl lysine isopeptide (Lys-Gly) (interchain with G-Cter in ubiquitin); alternate). Tyr211 is subject to Phosphotyrosine; by EGFR. N6-acetyllysine is present on Lys248. A Glycyl lysine isopeptide (Lys-Gly) (interchain with G-Cter in SUMO2) cross-link involves residue Lys254.

Belongs to the PCNA family. As to quaternary structure, homotrimer. Interacts with p300/EP300; the interaction occurs on chromatin in UV-irradiated damaged cells. Interacts with CREBBP (via transactivation domain and C-terminus); the interaction occurs on chromatin in UV-irradiated damaged cells. Directly interacts with POLD1, POLD3 and POLD4 subunits of the DNA polymerase delta complex, POLD3 being the major interacting partner; the interaction with POLD3 is inhibited by CDKN1A/p21(CIP1). Forms a complex with activator 1 heteropentamer in the presence of ATP. Interacts with EXO1, POLH, POLK, DNMT1, ERCC5, FEN1, CDC6 and POLDIP2. Interacts with POLB. Interacts with APEX2; this interaction is triggered by reactive oxygen species and increased by misincorporation of uracil in nuclear DNA. Forms a ternary complex with DNTTIP2 and core histone. Interacts with KCTD10 and PPP1R15A. Interacts with SMARCA5/SNF2H. Interacts with BAZ1B/WSTF; the interaction is direct and is required for BAZ1B/WSTF binding to replication foci during S phase. Interacts with HLTF and SHPRH. Interacts with NUDT15; this interaction is disrupted in response to UV irradiation and acetylation. Interacts with CDKN1A/p21(CIP1) and CDT1; interacts via their PIP-box which also recruits the DCX(DTL) complex. The interaction with CDKN1A inhibits POLD3 binding. Interacts with DDX11. Interacts with EGFR; positively regulates PCNA. Interacts with PARPBP. Interacts (when ubiquitinated) with SPRTN; leading to enhance RAD18-mediated PCNA ubiquitination. Interacts (when polyubiquitinated) with ZRANB3. Interacts with SMARCAD1. Interacts with CDKN1C. Interacts with PCLAF (via PIP-box). Interacts with RTEL1 (via PIP-box); the interaction is direct and essential for the suppression of telomere fragility. Interacts with FAM111A (via PIP-box); the interaction is direct and required for PCNA loading on chromatin binding. Interacts with LIG1. Interacts with SETMAR. Interacts with ANKRD17. Interacts with FBXO18/FBH1 (via PIP-box); the interaction recruits the DCX(DTL) complex and promotes ubiquitination and degradation of FBXO18/FBH1. Interacts with POLN. Interacts with SDE2 (via PIP-box); the interaction is direct and prevents ultraviolet light induced monoubiquitination. Component of the replisome complex composed of at least DONSON, MCM2, MCM7, PCNA and TICRR; interaction at least with PCNA occurs during DNA replication. Interacts with MAPK15; the interaction is chromatin binding dependent and prevents MDM2-mediated PCNA destruction by inhibiting the association of PCNA with MDM2. Interacts with PARP10 (via PIP-box). Interacts with DDI2. Interacts with HMCES (via PIP-box). Interacts with TRAIP (via PIP-box). Interacts with UHRF2. Interacts with ALKBH2; this interaction is enhanced during the S-phase of the cell cycle. Interacts with ATAD5; the interaction promotes USP1-mediated PCNA deubiquitination. Interacts (when phosphorylated) with GRB2. Interacts with nuclear UNG; this interaction mediates UNG recruitment to S-phase replication foci. Interacts with ERCC6L2 (via an atypical PIP-box); this interaction facilitates cenrtomeric localization of ERCC6L2. In terms of processing, phosphorylated. Phosphorylation at Tyr-211 by EGFR stabilizes chromatin-associated PCNA. Post-translationally, acetylated by CREBBP and p300/EP300; preferentially acetylated by CREBBP on Lys-80, Lys-13 and Lys-14 and on Lys-77 by p300/EP300 upon loading on chromatin in response to UV irradiation. Lysine acetylation disrupts association with chromatin, hence promoting PCNA ubiquitination and proteasomal degradation in response to UV damage in a CREBBP- and EP300-dependent manner. Acetylation disrupts interaction with NUDT15 and promotes degradation. Ubiquitinated. Following DNA damage, can be either monoubiquitinated to stimulate direct bypass of DNA lesions by specialized DNA polymerases or polyubiquitinated to promote recombination-dependent DNA synthesis across DNA lesions by template switching mechanisms. Following induction of replication stress, monoubiquitinated by the UBE2B-RAD18 complex on Lys-164, leading to recruit translesion (TLS) polymerases, which are able to synthesize across DNA lesions in a potentially error-prone manner. An error-free pathway also exists and requires non-canonical polyubiquitination on Lys-164 through 'Lys-63' linkage of ubiquitin moieties by the E2 complex UBE2N-UBE2V2 and the E3 ligases, HLTF, RNF8 and SHPRH. This error-free pathway, also known as template switching, employs recombination mechanisms to synthesize across the lesion, using as a template the undamaged, newly synthesized strand of the sister chromatid. Monoubiquitination at Lys-164 also takes place in undamaged proliferating cells, and is mediated by the DCX(DTL) complex, leading to enhance PCNA-dependent translesion DNA synthesis. Sumoylated during S phase. In terms of processing, methylated on glutamate residues by ARMT1.

It is found in the nucleus. Functionally, auxiliary protein of DNA polymerase delta and epsilon, is involved in the control of eukaryotic DNA replication by increasing the polymerase's processibility during elongation of the leading strand. Induces a robust stimulatory effect on the 3'-5' exonuclease and 3'-phosphodiesterase, but not apurinic-apyrimidinic (AP) endonuclease, APEX2 activities. Has to be loaded onto DNA in order to be able to stimulate APEX2. Plays a key role in DNA damage response (DDR) by being conveniently positioned at the replication fork to coordinate DNA replication with DNA repair and DNA damage tolerance pathways. Acts as a loading platform to recruit DDR proteins that allow completion of DNA replication after DNA damage and promote postreplication repair: Monoubiquitinated PCNA leads to recruitment of translesion (TLS) polymerases, while 'Lys-63'-linked polyubiquitination of PCNA is involved in error-free pathway and employs recombination mechanisms to synthesize across the lesion. This chain is Proliferating cell nuclear antigen (PCNA), found in Bos taurus (Bovine).